Consider the following 125-residue polypeptide: Protein ApaG (125 aa).

The ApaG domain occupies T3 to N125.

The protein is Protein ApaG of Anaeromyxobacter dehalogenans (strain 2CP-1 / ATCC BAA-258).